Consider the following 327-residue polypeptide: Phenylalanine--tRNA ligase alpha subunit (327 aa).

Glu252 lines the Mg(2+) pocket.

The protein belongs to the class-II aminoacyl-tRNA synthetase family. Phe-tRNA synthetase alpha subunit type 1 subfamily. In terms of assembly, tetramer of two alpha and two beta subunits. Mg(2+) is required as a cofactor.

It localises to the cytoplasm. The catalysed reaction is tRNA(Phe) + L-phenylalanine + ATP = L-phenylalanyl-tRNA(Phe) + AMP + diphosphate + H(+). In Proteus mirabilis (strain HI4320), this protein is Phenylalanine--tRNA ligase alpha subunit.